The primary structure comprises 119 residues: UPF0102 protein CGSHiGG_01960 (119 aa).

It belongs to the UPF0102 family.

The protein is UPF0102 protein CGSHiGG_01960 of Haemophilus influenzae (strain PittGG).